A 496-amino-acid chain; its full sequence is Squalene epoxidase ERG1 (496 aa).

Residues 1-16 (MSAVNVAPELINADNT) lie on the Cytoplasmic side of the membrane. Residues 17-37 (ITYDAIVIGAGVIGPCVATGL) traverse the membrane as a helical segment. FAD-binding positions include 28-29 (VI), 48-49 (ER), Arg56, and Arg158. The Lumenal segment spans residues 38-474 (ARKGKKVLIV…FLGLPMALLE (437 aa)). Residues Lys284, Lys289, and Lys311 each participate in a glycyl lysine isopeptide (Lys-Gly) (interchain with G-Cter in ubiquitin) cross-link. The FAD site is built by Asp335 and Met348. A helical transmembrane segment spans residues 475–495 (GIMILITAIRVFTPFLFGELI). Residue Gly496 is a topological domain, cytoplasmic.

This sequence belongs to the squalene monooxygenase family. In terms of assembly, interacts with ERG28. It depends on FAD as a cofactor.

The protein localises to the microsome membrane. It localises to the endoplasmic reticulum membrane. Its subcellular location is the lipid droplet. It carries out the reaction squalene + reduced [NADPH--hemoprotein reductase] + O2 = (S)-2,3-epoxysqualene + oxidized [NADPH--hemoprotein reductase] + H2O + H(+). Its pathway is terpene metabolism; lanosterol biosynthesis; lanosterol from farnesyl diphosphate: step 2/3. Its activity is regulated as follows. Inhibited by the allylamine antimycotic drugs. Squalene epoxidase; part of the third module of ergosterol biosynthesis pathway that includes the late steps of the pathway. ERG1 catalyzes the epoxidation of squalene into 2,3-epoxysqualene. The third module or late pathway involves the ergosterol synthesis itself through consecutive reactions that mainly occur in the endoplasmic reticulum (ER) membrane. Firstly, the squalene synthase ERG9 catalyzes the condensation of 2 farnesyl pyrophosphate moieties to form squalene, which is the precursor of all steroids. Squalene synthase is crucial for balancing the incorporation of farnesyl diphosphate (FPP) into sterol and nonsterol isoprene synthesis. Secondly, the squalene epoxidase ERG1 catalyzes the stereospecific oxidation of squalene to (S)-2,3-epoxysqualene, which is considered to be a rate-limiting enzyme in steroid biosynthesis. Then, the lanosterol synthase ERG7 catalyzes the cyclization of (S)-2,3 oxidosqualene to lanosterol, a reaction that forms the sterol core. In the next steps, lanosterol is transformed to zymosterol through a complex process involving various demethylation, reduction and desaturation reactions. The lanosterol 14-alpha-demethylase ERG11 (also known as CYP51) catalyzes C14-demethylation of lanosterol to produce 4,4'-dimethyl cholesta-8,14,24-triene-3-beta-ol, which is critical for ergosterol biosynthesis. The C-14 reductase ERG24 reduces the C14=C15 double bond of 4,4-dimethyl-cholesta-8,14,24-trienol to produce 4,4-dimethyl-cholesta-8,24-dienol. 4,4-dimethyl-cholesta-8,24-dienol is substrate of the C-4 demethylation complex ERG25-ERG26-ERG27 in which ERG25 catalyzes the three-step monooxygenation required for the demethylation of 4,4-dimethyl and 4alpha-methylsterols, ERG26 catalyzes the oxidative decarboxylation that results in a reduction of the 3-beta-hydroxy group at the C-3 carbon to an oxo group, and ERG27 is responsible for the reduction of the keto group on the C-3. ERG28 has a role as a scaffold to help anchor ERG25, ERG26 and ERG27 to the endoplasmic reticulum and ERG29 regulates the activity of the iron-containing C4-methylsterol oxidase ERG25. Then, the sterol 24-C-methyltransferase ERG6 catalyzes the methyl transfer from S-adenosyl-methionine to the C-24 of zymosterol to form fecosterol. The C-8 sterol isomerase ERG2 catalyzes the reaction which results in unsaturation at C-7 in the B ring of sterols and thus converts fecosterol to episterol. The sterol-C5-desaturase ERG3 then catalyzes the introduction of a C-5 double bond in the B ring to produce 5-dehydroepisterol. The C-22 sterol desaturase ERG5 further converts 5-dehydroepisterol into ergosta-5,7,22,24(28)-tetraen-3beta-ol by forming the C-22(23) double bond in the sterol side chain. Finally, ergosta-5,7,22,24(28)-tetraen-3beta-ol is substrate of the C-24(28) sterol reductase ERG4 to produce ergosterol. The sequence is that of Squalene epoxidase ERG1 from Saccharomyces cerevisiae (strain ATCC 204508 / S288c) (Baker's yeast).